Reading from the N-terminus, the 710-residue chain is F-box/WD repeat-containing protein 7 (710 aa).

Residues 1–158 (MNQELLSVGS…CSSVSDLPAH (158 aa)) form a disordered region. Ser26 carries the post-translational modification Phosphoserine. Over residues 46–55 (RHQEEEHTAR) the composition is skewed to basic and acidic residues. The segment covering 69-84 (QNDTQQGQVEENNNRF) has biased composition (polar residues). Acidic residues predominate over residues 87 to 132 (VDEDSSGNQEEQEEDEEHAGEQEEEEEEEEEEEEMDQESDDFDPSD). A compositionally biased stretch (basic and acidic residues) spans 133–142 (DSSREDEHTH). A compositionally biased stretch (polar residues) spans 143-158 (NSNVTNCSSVSDLPAH). Position 208 is a phosphothreonine (Thr208). Ser230 bears the Phosphoserine; by SGK1 mark. The region spanning 281–327 (RDFISLLPKELALYVLSFLEPKDLLQAAQTCRYWRILAEDNLLWREK) is the F-box domain. WD repeat units lie at residues 381–421 (GHDD…RTLV), 423–459 (HTGG…CIHT), 462–501 (GHTS…HVLM), 503–539 (HVAA…CLHT), 542–581 (GHTN…HTLT), 583–621 (HQSL…QTLQ), and 625–662 (KHQS…FIRN).

In terms of assembly, homodimer; homodimerization plays a role in substrate binding and/or ubiquitination and degradation. Component of the SCF(FBXW7) complex consisting of CUL1, RBX1, SKP1 and FBXW7. Interacts (via F-box domain) with SKP1. Interacts (via F-box domain) with pseudophosphatase STYX; the interaction is direct and prevents FBXW7 interaction with SKP1. Interacts with cyclin-E (CCNE1 or CCNE2). Interacts with PSEN1. Forms a trimeric complex with NOTCH1 and SGK1. Interacts with NOTCH1 intracellular domain/NICD and NOTCH4 intracellular domain/NICD. Interacts with NOTCH2 intracellular domain (N2ICD). Interacts with MYC (when phosphorylated). Interacts with USP28, counteracting ubiquitination of MYC. Interacts (when phosphorylated at Thr-208) with PIN1, disrupting FBXW7 dimerization and promoting FBXW7 autoubiquitination and degradation. Interacts with UBE2QL1. Interacts with FAM83D; promotes FBXW7 degradation. Interacts with MYCN; FBXW7 competes with AURKA for binding to unphosphorylated MYCN but not for binding to phosphorylated MYCN. Interacts with JUN. Found in a complex with JUN and PRR7. Interacts with JUN and PRR7; the interaction inhibits ubiquitination-mediated JUN degradation, promoting its phosphorylation and transcriptional activity. Interacts with NFE2L1. Interacts with NR1D1. Interacts with RICTOR; mediates RICTOR ubiquitination and degradation. Interacts with USP38, counteracting ubiquitination of MYC. Phosphorylation at Thr-208 promotes interaction with PIN1, leading to disrupt FBXW7 dimerization and promoting FBXW7 autoubiquitination and degradation. Phosphorylated by ATM at Ser-26 in response to DNA damage, promoting recruitment to DNA damage sites and 'Lys-63'-linked ubiquitination of phosphorylated XRCC4. Post-translationally, ubiquitinated: autoubiquitinates following phosphorylation at Thr-208 and subsequent interaction with PIN1. Ubiquitination leads to its proteasomal degradation. Widely expressed with highest levels in brain, heart and testis.

It is found in the nucleus. It localises to the nucleoplasm. The protein localises to the chromosome. It functions in the pathway protein modification; protein ubiquitination. Functionally, substrate recognition component of a SCF (SKP1-CUL1-F-box protein) E3 ubiquitin-protein ligase complex which mediates the ubiquitination and subsequent proteasomal degradation of target proteins. Recognizes and binds phosphorylated sites/phosphodegrons within target proteins and thereafter brings them to the SCF complex for ubiquitination. Mediates ubiquitination and subsequent degradation of CCNE1 and MYC. Identified substrates include cyclin-E (CCNE1 or CCNE2), DISC1, JUN, MYC, NOTCH1 released notch intracellular domain (NICD), NOTCH2, MCL1, MLST8, RICTOR and probably PSEN1. Acts as a negative regulator of JNK signaling by binding to phosphorylated JUN and promoting its ubiquitination and subsequent degradation. SCF(FBXW7) complex mediates the ubiquitination and subsequent degradation of NFE2L1. Involved in bone homeostasis and negative regulation of osteoclast differentiation. Regulates the amplitude of the cyclic expression of hepatic core clock genes and genes involved in lipid and glucose metabolism via ubiquitination and proteasomal degradation of their transcriptional repressor NR1D1; CDK1-dependent phosphorylation of NR1D1 is necessary for SCF(FBXW7)-mediated ubiquitination. Also able to promote 'Lys-63'-linked ubiquitination in response to DNA damage. The SCF(FBXW7) complex facilitates double-strand break repair following phosphorylation by ATM: phosphorylation promotes localization to sites of double-strand breaks and 'Lys-63'-linked ubiquitination of phosphorylated XRCC4, enhancing DNA non-homologous end joining. The chain is F-box/WD repeat-containing protein 7 from Mus musculus (Mouse).